Reading from the N-terminus, the 264-residue chain is Segregation and condensation protein A (264 aa).

The protein belongs to the ScpA family. In terms of assembly, component of a cohesin-like complex composed of ScpA, ScpB and the Smc homodimer, in which ScpA and ScpB bind to the head domain of Smc. The presence of the three proteins is required for the association of the complex with DNA.

Its subcellular location is the cytoplasm. In terms of biological role, participates in chromosomal partition during cell division. May act via the formation of a condensin-like complex containing Smc and ScpB that pull DNA away from mid-cell into both cell halves. The chain is Segregation and condensation protein A from Enterococcus faecalis (strain ATCC 700802 / V583).